The chain runs to 266 residues: CD82 antigen (266 aa).

At 1 to 11 the chain is on the cytoplasmic side; sequence MGAGCVKVTKY. A lipid anchor (S-palmitoyl cysteine) is attached at Cys-5. The chain crosses the membrane as a helical span at residues 12–32; the sequence is FLFLFNLLFFILGAVILGFGV. Topologically, residues 33–53 are extracellular; the sequence is WILADKNSFISVLQTSSSSLQ. The chain crosses the membrane as a helical span at residues 54 to 72; sequence VGAYVFIGVGAITIVMGFL. Residues 73 to 83 lie on the Cytoplasmic side of the membrane; that stretch reads GCIGAVNEVRC. The S-palmitoyl cysteine moiety is linked to residue Cys-74. Residues 84–110 traverse the membrane as a helical segment; sequence LLGLYFVFLLLILIAQVTVGVLFYFNA. Topologically, residues 111–227 are extracellular; the sequence is DKLKKEMGNT…KAQAWLQENF (117 aa). Asn-127, Asn-131, Asn-157, and Asn-197 each carry an N-linked (GlcNAc...) asparagine glycan. The helical transmembrane segment at 228-249 threads the bilayer; sequence GILLGVCAGVAVIELLGLFLSI. Topologically, residues 250–266 are cytoplasmic; the sequence is CLCRYIHSEDYSKVPKY.

It belongs to the tetraspanin (TM4SF) family. Forms homooligomers. Interacts directly with IGSF8. Interacts with EGFR. Interacts with VEGFA and PDGFA. Interacts with ITGA4. Interacts with ITGA6; this interaction reduces ITGA6 cell surface expression. Interacts with ITGB1. Interacts with TLR4; this interaction inhibits TLR4-mediated signaling pathway. Interacts with TLR9. Interacts with PLAUR. Palmitoylated. Palmitoylation contributes to oligomerization and surface expression. As to expression, highest expression in the spleen and the kidney. Low expression in skeletal muscle and in the heart.

It is found in the cell membrane. The protein resides in the cytoplasmic vesicle. The protein localises to the phagosome. Structural component of specialized membrane microdomains known as tetraspanin-enriched microdomains (TERMs), which act as platforms for receptor clustering and signaling. Participates thereby in diverse biological functions such as cell signal transduction, adhesion, migration and protein trafficking. Acts as a attenuator of EGF signaling, facilitating ligand-induced endocytosis of the receptor and its subsequent desensitization. Mechanistically, modulates ligand-induced ubiquitination and trafficking of EGFR via E3 ligase CBL phosphorylation by PKC. Increases cell-matrix adhesion by regulating the membrane organization of integrin alpha4/ITA4. Modulates adhesion and suppresses cell migration through other integrins such as the alpha6/ITGA6 and beta1/ITGB1. Decreases cell-associated plasminogen activation by interfering with the interaction between urokinase-type plasminogen activator/PLAU and its receptor PLAUR. Associates with CD4 or CD8 and delivers costimulatory signals for the TCR/CD3 pathway. Plays a role in the restrains phagocyte migration but supports macrophage activation. Plays a role in TLR9 trafficking to acidified CpG-containing compartments by controlling interaction between TLR9 and VAMP3 and subsequent myddosome assembly. Inhibits LPS-induced inflammatory response by preventing binding of LPS to TLR4 on the cell surface. Plays a role in the activation of macrophages into anti-inflammatory phenotypes. Independently of Toll-like receptor (TLR) signaling, is recruited to pathogen-containing phagosomes prior to fusion with lysosomes and participates in antigen presentation. Also acts to control angiogenesis and switch angiogenic milieu to quiescent state by binding and sequestering VEGFA and PDGFA to inhibit the signaling they trigger via their respective cell surface receptor. The sequence is that of CD82 antigen (Cd82) from Mus musculus (Mouse).